A 473-amino-acid chain; its full sequence is H(+)/Cl(-) exchange transporter ClcA (473 aa).

At 1–32 the chain is on the cytoplasmic side; sequence MKTDNSTFLAQQIVRLRRRDQIRRLMQRDKTP. The chain crosses the membrane as a helical span at residues 33–69; it reads LAILFMAAVVGTLTGLVGVAFEKAVSWVQNMRIGALV. Residues 70–76 are Periplasmic-facing; that stretch reads QVADHAF. A helical membrane pass occupies residues 77 to 100; it reads LLWPLAFILSALLAMVGYFLVRKF. Positions 106–110 match the Selectivity filter part_1 motif; it reads GSGIP. Serine 107 contributes to the chloride binding site. The helical intramembrane region spans 109 to 116; it reads IPEIEGAL. Topologically, residues 117-123 are cytoplasmic; the sequence is EELRPVR. The next 2 membrane-spanning stretches (helical) occupy residues 124-141 and 148-166; these read WWRV…TLGA and EGPT…LDVF. Positions 146–150 match the Selectivity filter part_2 motif; that stretch reads GREGP. Residues 167–176 lie on the Cytoplasmic side of the membrane; the sequence is RMRSAEARHT. 2 intramembrane regions (helical) span residues 177-189 and 193-201; these read LLAT…LSAA and PLAGILFII. Residues 202 to 214 lie on the Cytoplasmic side of the membrane; the sequence is EEMRPQFRYNLIS. A helical transmembrane segment spans residues 215 to 232; it reads IKAVFTGVIMSSIVFRIF. At 233–252 the chain is on the periplasmic side; sequence NGEAPIIEVGKLSDAPVNTL. A helical transmembrane segment spans residues 253–281; it reads WLYLILGIIFGCVGPVFNSLVLRTQDMFQ. The Cytoplasmic segment spans residues 282–287; the sequence is RFHGGE. Residues 288-309 form a helical membrane-spanning segment; it reads IKKWVLMGGAIGGLCGILGLIE. Over 310–329 the chain is Periplasmic; that stretch reads PEAAGGGFNLIPIAAAGNFS. 2 consecutive transmembrane segments (helical) span residues 330–349 and 355–376; these read VGLL…LCFS and GIFA…MAAA. Positions 355-359 match the Selectivity filter part_3 motif; sequence GIFAP. Chloride contacts are provided by isoleucine 356 and phenylalanine 357. Topologically, residues 377-386 are periplasmic; that stretch reads VLFPQYHLEA. The helical intramembrane region spans 387–401; that stretch reads GTFAIAGMGALMAAS. Positions 402–404 form an intramembrane region, note=Loop between two helices; that stretch reads VRA. Residues 405 to 416 constitute an intramembrane region (helical); that stretch reads PLTGIVLVLEMT. An intramembrane region (note=Loop between two helices) is located at residues 417-421; the sequence is DNYQL. Residues 422–438 traverse the membrane as a helical segment; the sequence is ILPMIITCLGATLLAQF. Over 439 to 473 the chain is Cytoplasmic; sequence LGGKPLYSTILARTLAKQDAEQAAKNQNAPAGENT. Tyrosine 445 contacts chloride.

The protein belongs to the chloride channel (TC 2.A.49) family. ClcA subfamily. Homodimer.

The protein resides in the cell inner membrane. The enzyme catalyses 2 chloride(in) + H(+)(out) = 2 chloride(out) + H(+)(in). Its function is as follows. Proton-coupled chloride transporter. Functions as antiport system and exchanges two chloride ions for 1 proton. Probably acts as an electrical shunt for an outwardly-directed proton pump that is linked to amino acid decarboxylation, as part of the extreme acid resistance (XAR) response. The polypeptide is H(+)/Cl(-) exchange transporter ClcA (Salmonella schwarzengrund (strain CVM19633)).